The primary structure comprises 309 residues: MDPRCTMGLAILIFVTVLLISDAVSVETQAYFNGTAYLPCPFTKAQNISLSELVVFWQDQQKLVLYEHYLGTEKLDSVNAKYLGRTSFDRNNWTLRLHNVQIKDMGSYDCFIQKKPPTGSIILQQTLTELSVIANFSEPEIKLAQNVTGNSGINLTCTSKQGHPKPKKMYFLITNSTNEYGDNMQISQDNVTELFSISNSLSLSFPDGVWHMTVVCVLETESMKISSKPLNFTQEFPSPQTYWKEITASVTVALLLVMLLIIVCHKKPNQPSRPSNTASKLERDSNADRETINLKELEPQIASAKPNAE.

A signal peptide spans 1 to 23; it reads MDPRCTMGLAILIFVTVLLISDA. Over 24–244 the chain is Extracellular; sequence VSVETQAYFN…EFPSPQTYWK (221 aa). 9 N-linked (GlcNAc...) asparagine glycosylation sites follow: asparagine 33, asparagine 47, asparagine 92, asparagine 135, asparagine 146, asparagine 154, asparagine 175, asparagine 190, and asparagine 231. The region spanning 33–128 is the Ig-like V-type domain; the sequence is NGTAYLPCPF…GSIILQQTLT (96 aa). A disulfide bridge connects residues cysteine 40 and cysteine 110. The Ig-like C2-type domain maps to 150-223; that stretch reads NSGINLTCTS…VVCVLETESM (74 aa). A disulfide bridge links cysteine 157 with cysteine 216. A helical membrane pass occupies residues 245 to 265; that stretch reads EITASVTVALLLVMLLIIVCH. At 266–309 the chain is on the cytoplasmic side; sequence KKPNQPSRPSNTASKLERDSNADRETINLKELEPQIASAKPNAE. Residues 269-279 show a composition bias toward polar residues; it reads NQPSRPSNTAS. The tract at residues 269–309 is disordered; the sequence is NQPSRPSNTASKLERDSNADRETINLKELEPQIASAKPNAE. A compositionally biased stretch (basic and acidic residues) spans 280 to 298; sequence KLERDSNADRETINLKELE.

In terms of assembly, homodimer. Interacts with MARCH8. Interacts (via cytoplasmic domain) with PHB1 and PHB2; the interactions increases after priming with CD40. Interacts with CD28. Polyubiquitinated; which is promoted by MARCH8 and results in endocytosis and lysosomal degradation. As to expression, expressed on activated B-cells.

The protein resides in the cell membrane. Functionally, receptor involved in the costimulatory signal essential for T-lymphocyte proliferation and interleukin-2 production, by binding CD28 or CTLA-4. May play a critical role in the early events of T-cell activation and costimulation of naive T-cells, such as deciding between immunity and anergy that is made by T-cells within 24 hours after activation. Also involved in the regulation of B cells function, plays a role in regulating the level of IgG(1) produced. Upon CD40 engagement, activates NF-kappa-B signaling pathway via phospholipase C and protein kinase C activation. This is T-lymphocyte activation antigen CD86 (Cd86) from Mus musculus (Mouse).